Here is a 700-residue protein sequence, read N- to C-terminus: MIEASKLTTEFGSLVFNDKIMKERLPKDIYKAVHKTIEKEPHLEPGCSYSCSSNHEGVGNREQCYHFTPPGSSPMTGLTAEKHDSFISPTEDGRSSWSSQEKSWLRANLMHQASQWWSSCHNSSMRGYQHGILHHHAFIKDGSLLLPTAFCSYGGEALDRDSLLRSMEALSNEAVKMMRLLGYEDVNRVNTTIGSEQEYFLIDKDFYKKRKDLLLTGRTLIGAPASKGQEMEDHYFGVIKPKVSAYMHDLDEELWKLGIPAKTKHNEVAPSQHELAPVFETANIAVDHNQLTMEVMKKVADKHNYACLLHEKPFEGVNGSGKHNNWSICTDTGINLLDPGKNPGENIPFLVFLMSVIAAVDEYAPILRLSVASAGNDHRLGGNEAPPAIISIFVGDELAEVLKAVEAGEAYKAAGKSQMTWEQQYFTFTKDNTDRNRTSPFAFTGNKFESDGGHSSVANGKYGPQHMQLQKEVATLNAKLSAYSGDELKEKVKEVLKETLLAHKRVLFNGNGYTDEWVEEAAKRGLPNLKALPDCMPYWISDESIDLFTRHGIFTKEEIYSRYEILLENYSKSIHIESLTMQEMIRKDLTEGLVAYEKDLSKEIVQKKSLLDGDCCALELGVLKSLDKSSAEMGKALSKLFEDTKKAEGMTEALETASYYESTVLADMDELRKYADEAEALIPEKYLSYPTYGEMLFSLR.

The GS beta-grasp domain maps to 65–155 (YHFTPPGSSP…LPTAFCSYGG (91 aa)). Positions 159 to 589 (DRDSLLRSME…TMQEMIRKDL (431 aa)) constitute a GS catalytic domain. Mg(2+) contacts are provided by Glu196, Glu198, Glu267, and Glu274. L-glutamate contacts are provided by residues 318–319 (NG) and Gly319. His323 lines the Mg(2+) pocket. Residues Ser327 and Arg435 each contribute to the ATP site. Residue Arg435 coordinates L-glutamate. A Mg(2+)-binding site is contributed by Glu472.

Belongs to the glutamine synthetase family. As to quaternary structure, homohexamer. It depends on Mg(2+) as a cofactor.

It localises to the cytoplasm. The enzyme catalyses L-glutamate + NH4(+) + ATP = L-glutamine + ADP + phosphate + H(+). The activity of this enzyme is not controlled by adenylation. Its function is as follows. Catalyzes the ATP-dependent biosynthesis of glutamine from glutamate and ammonia. The chain is Glutamine synthetase from Butyrivibrio fibrisolvens.